The following is a 522-amino-acid chain: Cell polarity protein mod5 (522 aa).

Disordered stretches follow at residues 1-83, 119-158, 170-192, 251-285, and 300-516; these read MSAL…PDGD, KRSA…FNSN, RRIL…TKSA, PLQP…SPVP, and YSPS…KLEK. 3 stretches are compositionally biased toward polar residues: residues 27–46, 66–76, and 131–146; these read PNTT…SAPS, LPSSKQDTGSS, and NGST…SPSE. Ser-43 bears the Phosphoserine mark. Over residues 258 to 285 the composition is skewed to low complexity; sequence PANETPASSSSSAKARPVSVPDMSSPVP. The residue at position 303 (Ser-303) is a Phosphoserine. Basic and acidic residues predominate over residues 308–318; the sequence is KVAETDSESRK. The segment covering 335–349 has biased composition (polar residues); the sequence is GAQTQSTPNRISRSD. At Ser-350 the chain carries Phosphoserine. 2 stretches are compositionally biased toward polar residues: residues 363-396 and 404-431; these read NAST…TSTN and DIPQ…TPQV. A compositionally biased stretch (low complexity) spans 439–452; sequence SRSSPLPSASVPAL. Composition is skewed to basic and acidic residues over residues 472–482 and 495–516; these read HESEMPPHVTR and PKEK…KLEK.

In terms of assembly, interacts with tea1 and tea3.

It localises to the cell membrane. In terms of biological role, with tea1, acts in a positive-feedback loop in the microtubule-mediated regulation of cell polarity. Involved in the anchoring of tea1 at the cortex as well as the correct localization of tea3. The chain is Cell polarity protein mod5 (mod5) from Schizosaccharomyces pombe (strain 972 / ATCC 24843) (Fission yeast).